The primary structure comprises 148 residues: Large ribosomal subunit protein bL28c (148 aa).

The N-terminal 71 residues, 1–71 (MAASGMLISN…PLKPSLQPVA (71 aa)), are a transit peptide targeting the chloroplast.

In terms of assembly, component of the chloroplast large ribosomal subunit (LSU). Mature 70S chloroplast ribosomes of higher plants consist of a small (30S) and a large (50S) subunit. The 30S small subunit contains 1 molecule of ribosomal RNA (16S rRNA) and 24 different proteins. The 50S large subunit contains 3 rRNA molecules (23S, 5S and 4.5S rRNA) and 33 different proteins.

It localises to the plastid. The protein resides in the chloroplast. Its function is as follows. Component of the chloroplast ribosome (chloro-ribosome), a dedicated translation machinery responsible for the synthesis of chloroplast genome-encoded proteins, including proteins of the transcription and translation machinery and components of the photosynthetic apparatus. The sequence is that of Large ribosomal subunit protein bL28c (RPL28) from Spinacia oleracea (Spinach).